The sequence spans 346 residues: Lipase chaperone (346 aa).

The helical transmembrane segment at 10 to 30 (TIVFGVITSVLLLLLLIYYVF) threads the bilayer.

It belongs to the lipase chaperone family.

The protein localises to the cell inner membrane. Functionally, may be involved in the folding of the extracellular lipase during its passage through the periplasm. The protein is Lipase chaperone (lifO) of Acinetobacter venetianus (strain ATCC 31012 / DSM 23050 / BCRC 14357 / CCUG 45561 / CIP 110063 / KCTC 2702 / LMG 19082 / RAG-1).